Reading from the N-terminus, the 264-residue chain is Thiazole synthase (264 aa).

Lysine 106 (schiff-base intermediate with DXP) is an active-site residue. Residues glycine 167, 193-194 (AG), and 215-216 (NS) contribute to the 1-deoxy-D-xylulose 5-phosphate site.

Belongs to the ThiG family. Homotetramer. Forms heterodimers with either ThiH or ThiS.

It is found in the cytoplasm. It carries out the reaction [ThiS sulfur-carrier protein]-C-terminal-Gly-aminoethanethioate + 2-iminoacetate + 1-deoxy-D-xylulose 5-phosphate = [ThiS sulfur-carrier protein]-C-terminal Gly-Gly + 2-[(2R,5Z)-2-carboxy-4-methylthiazol-5(2H)-ylidene]ethyl phosphate + 2 H2O + H(+). It functions in the pathway cofactor biosynthesis; thiamine diphosphate biosynthesis. In terms of biological role, catalyzes the rearrangement of 1-deoxy-D-xylulose 5-phosphate (DXP) to produce the thiazole phosphate moiety of thiamine. Sulfur is provided by the thiocarboxylate moiety of the carrier protein ThiS. In vitro, sulfur can be provided by H(2)S. This chain is Thiazole synthase, found in Stutzerimonas stutzeri (strain A1501) (Pseudomonas stutzeri).